Consider the following 310-residue polypeptide: MPTEDYDSKPSWADQVEEEGIDPEPISPPVTKVQQDPASFVLDTPQEVINGKIKTITEYKLNDEGKKIKIVRTFKIETLKASKVVAHRKNWKKFGNSEYDPPGPNVATTTVSDDVLMTFITSKEDLNNQEEEDPMNKLKGQKIVSCRICKGDHWTTRCPYKDTLGPMQKELAEQLGLSTGDKEKAPGAEPEPAQAPVSKTGKYVPPSLRDGGSRRGESMQPNRRADDNATIRVTNLSEDTRETDLQELFRPFGSISRIYLAKDKTTGQSKGFAFISFHRREDAARAIAGVSGFGYDHLILNVEWAKPSTN.

Disordered stretches follow at residues 1–32 (MPTEDYDSKPSWADQVEEEGIDPEPISPPVTK) and 179–229 (TGDK…DDNA). The span at 187–196 (GAEPEPAQAP) shows a compositional bias: low complexity. Residues 211 to 229 (GGSRRGESMQPNRRADDNA) are compositionally biased toward basic and acidic residues. Residues 229 to 307 (ATIRVTNLSE…LILNVEWAKP (79 aa)) enclose the RRM domain.

This sequence belongs to the eIF-3 subunit G family. Component of the eukaryotic translation initiation factor 3 (eIF-3) complex, which is composed of 13 subunits: eif3a, eif3b, eif3c, eif3d, eif3e, eif3f, eif3g, eif3h, eif3i, eif3j, eif3k, eif3l and eif3m.

Its subcellular location is the cytoplasm. Its function is as follows. RNA-binding component of the eukaryotic translation initiation factor 3 (eIF-3) complex, which is involved in protein synthesis of a specialized repertoire of mRNAs and, together with other initiation factors, stimulates binding of mRNA and methionyl-tRNAi to the 40S ribosome. The eIF-3 complex specifically targets and initiates translation of a subset of mRNAs involved in cell proliferation. This subunit can bind 18S rRNA. The chain is Eukaryotic translation initiation factor 3 subunit G (eif3g) from Xenopus tropicalis (Western clawed frog).